The following is a 32-amino-acid chain: Protamine-1 (32 aa).

The tract at residues 1–32 (PRRRRASSGRPVRRRRRPKMSRRRRRGGRRRR) is disordered.

As to expression, testis.

Its subcellular location is the nucleus. It is found in the chromosome. Its function is as follows. Protamines substitute for histones in the chromatin of sperm during the haploid phase of spermatogenesis. They compact sperm DNA into a highly condensed, stable and inactive complex. The sequence is that of Protamine-1 from Esox lucius (Northern pike).